A 204-amino-acid chain; its full sequence is Small ribosomal subunit protein uS4 (204 aa).

One can recognise an S4 RNA-binding domain in the interval 94-157 (RRLDNVVYRL…KKLEVFKENL (64 aa)).

Belongs to the universal ribosomal protein uS4 family. Part of the 30S ribosomal subunit. Contacts protein S5. The interaction surface between S4 and S5 is involved in control of translational fidelity.

Functionally, one of the primary rRNA binding proteins, it binds directly to 16S rRNA where it nucleates assembly of the body of the 30S subunit. In terms of biological role, with S5 and S12 plays an important role in translational accuracy. In Sulfurihydrogenibium sp. (strain YO3AOP1), this protein is Small ribosomal subunit protein uS4.